The following is a 343-amino-acid chain: tRNA N6-adenosine threonylcarbamoyltransferase (343 aa).

Residues His-111 and His-115 each coordinate Fe cation. Residues 134–138 (LVSGG), Asp-167, Gly-180, and Asn-276 each bind substrate. Asp-304 is a binding site for Fe cation.

This sequence belongs to the KAE1 / TsaD family. The cofactor is Fe(2+).

Its subcellular location is the cytoplasm. The catalysed reaction is L-threonylcarbamoyladenylate + adenosine(37) in tRNA = N(6)-L-threonylcarbamoyladenosine(37) in tRNA + AMP + H(+). In terms of biological role, required for the formation of a threonylcarbamoyl group on adenosine at position 37 (t(6)A37) in tRNAs that read codons beginning with adenine. Is involved in the transfer of the threonylcarbamoyl moiety of threonylcarbamoyl-AMP (TC-AMP) to the N6 group of A37, together with TsaE and TsaB. TsaD likely plays a direct catalytic role in this reaction. This is tRNA N6-adenosine threonylcarbamoyltransferase from Chromohalobacter salexigens (strain ATCC BAA-138 / DSM 3043 / CIP 106854 / NCIMB 13768 / 1H11).